The chain runs to 159 residues: MEKTDEERKKAQMLDARARNISHNVRCTECGSQSIEDSQADIAILLRQLIRNEIGAGKTDKEIYSKLEDEFGETVLYAPKFDLQTAALWLTPVIIAGGTAAGIVYQKHRLRKNVDIMALNLIRGVPLTPKERVTILDVLIPPSPPPQGVVSRLRRWLNR.

Over 1-82 the chain is Mitochondrial intermembrane; the sequence is MEKTDEERKK…ETVLYAPKFD (82 aa). Heme-binding residues include C27 and C30. A helical transmembrane segment spans residues 83 to 105; the sequence is LQTAALWLTPVIIAGGTAAGIVY. Residues 106 to 159 lie on the Mitochondrial matrix side of the membrane; it reads QKHRLRKNVDIMALNLIRGVPLTPKERVTILDVLIPPSPPPQGVVSRLRRWLNR.

The protein belongs to the CcmH/CycL/Ccl2/NrfF family. Interacts (via N-terminus) with CYTC-1. Interacts with CCMFN1 and CCMFN2.

It is found in the mitochondrion inner membrane. Its function is as follows. Plays a central role in mitochondrial cytochrome c maturation. Probable component of a heme lyase complex involved in the reduction of apocytochrome c. Forms a complex with CCMF proteins (CCMFC, CCMFN1 and CCMFN2) that performs the assembly of heme with c-type apocytochromes in mitochondria. The chain is Cytochrome c-type biogenesis CcmH-like mitochondrial protein from Arabidopsis thaliana (Mouse-ear cress).